A 194-amino-acid chain; its full sequence is Peroxynitrite isomerase 1 (194 aa).

Positions 40 to 46 (GVWRGEG) match the GXWXGXG motif. Residues lysine 157 and histidine 184 each coordinate heme b.

Belongs to the nitrobindin family. In terms of assembly, homodimer. The cofactor is heme b.

It catalyses the reaction peroxynitrite = nitrate. It functions in the pathway nitrogen metabolism. Its function is as follows. Heme-binding protein able to scavenge peroxynitrite and to protect free L-tyrosine against peroxynitrite-mediated nitration, by acting as a peroxynitrite isomerase that converts peroxynitrite to nitrate. Therefore, this protein likely plays a role in peroxynitrite sensing and in the detoxification of reactive nitrogen and oxygen species (RNS and ROS, respectively). Is able to bind nitric oxide (NO) in vitro, but may act as a sensor of peroxynitrite levels in vivo. The chain is Peroxynitrite isomerase 1 from Mycobacterium ulcerans (strain Agy99).